We begin with the raw amino-acid sequence, 497 residues long: POU domain, class 3, transcription factor 3 (497 aa).

The segment covering 31 to 51 (GGGGGGGGGGGGAGGGGGGMQ) has biased composition (gly residues). 4 disordered regions span residues 31–62 (GGGG…SGAY), 121–189 (WSGS…WGAA), 230–316 (NGML…TPTS), and 458–497 (EKRM…TSVQ). Pro residues-rich tracts occupy residues 133–145 (QQPP…PPQG) and 170–180 (HLGPPPPPPHQ). The segment covering 240–250 (GGGGGGAGGGA) has biased composition (gly residues). A compositionally biased stretch (basic residues) spans 269-286 (HHHHHHHHAHPHPPHPHH). The POU-specific domain maps to 311-385 (EDTPTSDDLE…LLNKWLEEAD (75 aa)). The homeobox DNA-binding region spans 403-462 (KRKKRTSIEVSVKGALESHFLKCPKPSAQEITNLADSLQLEKEVVRVWFCNRRQKEKRMT). The span at 465–483 (GIQQQTPDDVYSQVGTVSA) shows a compositional bias: polar residues.

This sequence belongs to the POU transcription factor family. Class-3 subfamily. Homodimer. As to expression, brain.

It localises to the nucleus. Transcription factor that acts synergistically with SOX11 and SOX4. Plays a role in neuronal development. Is implicated in an enhancer activity at the embryonic met-mesencephalic junction; the enhancer element contains the octamer motif (5'-ATTTGCAT-3'). The chain is POU domain, class 3, transcription factor 3 (Pou3f3) from Rattus norvegicus (Rat).